A 266-amino-acid polypeptide reads, in one-letter code: Interleukin-1 beta (266 aa).

The propeptide occupies 1–114; the sequence is MAAVPELTSE…KTDADNFMSD (114 aa).

It belongs to the IL-1 family. Monomer. In its precursor form, weakly interacts with full-length MEFV; the mature cytokine does not interact at all. Interacts with integrins ITGAV:ITGBV and ITGA5:ITGB1; integrin-binding is required for IL1B signaling. Interacts with cargo receptor TMED10; the interaction is direct and is required for the secretion of IL1B mature form. Interacts with HSP90AB1; the interaction facilitates cargo translocation into the ERGIC. Interacts with HSP90B1; the interaction facilitates cargo translocation into the ERGIC.

It localises to the cytoplasm. Its subcellular location is the cytosol. The protein resides in the secreted. The protein localises to the lysosome. It is found in the extracellular exosome. Potent pro-inflammatory cytokine. Initially discovered as the major endogenous pyrogen, induces prostaglandin synthesis, neutrophil influx and activation, T-cell activation and cytokine production, B-cell activation and antibody production, and fibroblast proliferation and collagen production. Promotes Th17 differentiation of T-cells. Synergizes with IL12/interleukin-12 to induce IFNG synthesis from T-helper 1 (Th1) cells. Plays a role in angiogenesis by inducing VEGF production synergistically with TNF and IL6. Involved in transduction of inflammation downstream of pyroptosis: its mature form is specifically released in the extracellular milieu by passing through the gasdermin-D (GSDMD) pore. The polypeptide is Interleukin-1 beta (IL1B) (Canis lupus familiaris (Dog)).